We begin with the raw amino-acid sequence, 312 residues long: Olfactory receptor 10P22 (312 aa).

At 1 to 26 (MGDDNDTDITEFILLGFSGYGFLQGH) the chain is on the extracellular side. The N-linked (GlcNAc...) asparagine glycan is linked to Asn5. The helical transmembrane segment at 27–47 (LFWGVLCIYVVTLLGNSLIVL) threads the bilayer. Over 48–57 (LTLADSALHS) the chain is Cytoplasmic. The helical transmembrane segment at 58-78 (PMYFFLRHFSVVEILYTTTIV) threads the bilayer. Residues 79–89 (PRMLADLRSSC) are Extracellular-facing. The helical transmembrane segment at 90–110 (PTIPLASCFTQLYFFALFGIA) threads the bilayer. The Cytoplasmic segment spans residues 111-143 (ECCLLTAMAYDRYAAICCPLHYTTLMSQGTYTG). A helical membrane pass occupies residues 144–164 (LVGASYLAGVISGTTHSIFIF). Residues 165–205 (TLPFRGAKTIHHFLCDILPVLRLATASTFWGEVGNLFVTIT) lie on the Extracellular side of the membrane. Residues 206 to 226 (FIFVPFLLIVASYACILVTIL) traverse the membrane as a helical segment. The Cytoplasmic segment spans residues 227-236 (GVATSQGRQK). A helical transmembrane segment spans residues 237 to 257 (LFSTCSSHLFVVILFFGTATV). Topologically, residues 258-271 (AYMRPQADSFGNTD) are extracellular. Residues 272–292 (QILTLVYTVVTPMCNPFVYSL) traverse the membrane as a helical segment. Residues 293–312 (RNKEVTGAMRRLMKRYLWGP) are Cytoplasmic-facing.

This sequence belongs to the G-protein coupled receptor 1 family.

The protein localises to the cell membrane. In terms of biological role, odorant receptor. This Mus musculus (Mouse) protein is Olfactory receptor 10P22.